We begin with the raw amino-acid sequence, 451 residues long: Macrophage scavenger receptor types I and II (451 aa).

Residues 1–50 are Cytoplasmic-facing; that stretch reads MEQWDHFHNQQEDTDSCSESVKFDARSMTALLPPNPKNSPSLQEKLKSFK. A Phosphoserine modification is found at Ser27. A helical; Signal-anchor for type II membrane protein membrane pass occupies residues 51–76; sequence AALIALYLLVFAVLIPLIGIVAAQLL. The tract at residues 77–109 is spacer; that stretch reads KWETKNCSVSSTNANDITQSLTGKGNDSEEEMR. Residues 77-451 are Extracellular-facing; sequence KWETKNCSVS…SEDAGVTCTL (375 aa). 7 N-linked (GlcNAc...) asparagine glycosylation sites follow: Asn82, Asn102, Asn143, Asn184, Asn221, Asn249, and Asn267. Residues 171–255 are a coiled coil; that stretch reads NAIDEISKSL…VLNNITNDLR (85 aa). The tract at residues 267–346 is disordered; sequence NITLIQGPPG…EKGSGNTLTP (80 aa). A Collagen-like domain is found at 273-341; that stretch reads GPPGPPGEKG…KGQKGEKGSG (69 aa). One can recognise an SRCR domain in the interval 350-450; the sequence is VRLVGGSGPH…HSEDAGVTCT (101 aa). Cystine bridges form between Cys375/Cys439, Cys388/Cys449, and Cys419/Cys429.

In terms of assembly, homotrimer. Interacts with MYO18A. Isoform I, isoform II and isoform III are expressed in monocyte-derived macrophages. Isoform I and isoform II are expressed in the liver, placenta and brain.

Its subcellular location is the membrane. In terms of biological role, membrane glycoproteins implicated in the pathologic deposition of cholesterol in arterial walls during atherogenesis. Two types of receptor subunits exist. These receptors mediate the endocytosis of a diverse group of macromolecules, including modified low density lipoproteins (LDL). Isoform III does not internalize acetylated LDL. The chain is Macrophage scavenger receptor types I and II (MSR1) from Homo sapiens (Human).